The chain runs to 281 residues: Protein phosphatase 2C homolog 1 (281 aa).

The PPM-type phosphatase domain maps to 20–281 (RVGVAENKNS…DNVTVMVVFL (262 aa)). Mn(2+) is bound by residues D58, G59, D233, and D272.

This sequence belongs to the PP2C family. In terms of assembly, interacts with NBP2 and PBS2. Mg(2+) is required as a cofactor. The cofactor is Mn(2+).

The protein localises to the peroxisome. It catalyses the reaction O-phospho-L-seryl-[protein] + H2O = L-seryl-[protein] + phosphate. It carries out the reaction O-phospho-L-threonyl-[protein] + H2O = L-threonyl-[protein] + phosphate. Functionally, serine and threonine phosphatase. Involved in tRNA splicing and cell separation. This chain is Protein phosphatase 2C homolog 1 (PTC1), found in Saccharomyces cerevisiae (strain ATCC 204508 / S288c) (Baker's yeast).